The chain runs to 86 residues: Small ribosomal subunit protein bS18 (86 aa).

Belongs to the bacterial ribosomal protein bS18 family. In terms of assembly, part of the 30S ribosomal subunit. Forms a tight heterodimer with protein bS6.

Its function is as follows. Binds as a heterodimer with protein bS6 to the central domain of the 16S rRNA, where it helps stabilize the platform of the 30S subunit. This is Small ribosomal subunit protein bS18 from Campylobacter fetus subsp. fetus (strain 82-40).